A 181-amino-acid polypeptide reads, in one-letter code: Adenine phosphoribosyltransferase (181 aa).

It belongs to the purine/pyrimidine phosphoribosyltransferase family. Homodimer.

It localises to the cytoplasm. The catalysed reaction is AMP + diphosphate = 5-phospho-alpha-D-ribose 1-diphosphate + adenine. Its pathway is purine metabolism; AMP biosynthesis via salvage pathway; AMP from adenine: step 1/1. Catalyzes a salvage reaction resulting in the formation of AMP, that is energically less costly than de novo synthesis. This chain is Adenine phosphoribosyltransferase, found in Vibrio parahaemolyticus serotype O3:K6 (strain RIMD 2210633).